The sequence spans 548 residues: Eukaryotic translation initiation factor 3 subunit D (548 aa).

An N6-acetyllysine modification is found at Lys-53. Ser-161 carries the post-translational modification Phosphoserine. The tract at residues 285-299 (DFDLLTVSETANEPP) is RNA gate. The disordered stretch occupies residues 523-548 (PDGTFSSDEDEEEEEEEEEEEEEEET). 2 positions are modified to phosphoserine: Ser-528 and Ser-529. A compositionally biased stretch (acidic residues) spans 529–548 (SDEDEEEEEEEEEEEEEEET).

This sequence belongs to the eIF-3 subunit D family. Component of the eukaryotic translation initiation factor 3 (eIF-3) complex, which is composed of 13 subunits: EIF3A, EIF3B, EIF3C, EIF3D, EIF3E, EIF3F, EIF3G, EIF3H, EIF3I, EIF3J, EIF3K, EIF3L and EIF3M. The eIF-3 complex appears to include 3 stable modules: module A is composed of EIF3A, EIF3B, EIF3G and EIF3I; module B is composed of EIF3F, EIF3H, and EIF3M; and module C is composed of EIF3C, EIF3D, EIF3E, EIF3K and EIF3L. EIF3C of module C binds EIF3B of module A and EIF3H of module B, thereby linking the three modules. EIF3J is a labile subunit that binds to the eIF-3 complex via EIF3B. The eIF-3 complex interacts with RPS6KB1 under conditions of nutrient depletion. Mitogenic stimulation leads to binding and activation of a complex composed of MTOR and RPTOR, leading to phosphorylation and release of RPS6KB1 and binding of EIF4B to eIF-3. As to quaternary structure, (Microbial infection) Interacts with Norwalk virus VPg protein.

It is found in the cytoplasm. Functionally, mRNA cap-binding component of the eukaryotic translation initiation factor 3 (eIF-3) complex, a complex required for several steps in the initiation of protein synthesis of a specialized repertoire of mRNAs. The eIF-3 complex associates with the 40S ribosome and facilitates the recruitment of eIF-1, eIF-1A, eIF-2:GTP:methionyl-tRNAi and eIF-5 to form the 43S pre-initiation complex (43S PIC). The eIF-3 complex stimulates mRNA recruitment to the 43S PIC and scanning of the mRNA for AUG recognition. The eIF-3 complex is also required for disassembly and recycling of post-termination ribosomal complexes and subsequently prevents premature joining of the 40S and 60S ribosomal subunits prior to initiation. The eIF-3 complex specifically targets and initiates translation of a subset of mRNAs involved in cell proliferation, including cell cycling, differentiation and apoptosis, and uses different modes of RNA stem-loop binding to exert either translational activation or repression. In the eIF-3 complex, EIF3D specifically recognizes and binds the 7-methylguanosine cap of a subset of mRNAs. (Microbial infection) In case of FCV infection, plays a role in the ribosomal termination-reinitiation event leading to the translation of VP2. In Homo sapiens (Human), this protein is Eukaryotic translation initiation factor 3 subunit D.